We begin with the raw amino-acid sequence, 349 residues long: ATP phosphoribosyltransferase regulatory subunit (349 aa).

Residues 325–349 form a disordered region; it reads ANGRGRGVRPRRASARGGRAGTRPR. The span at 339 to 349 shows a compositional bias: low complexity; the sequence is ARGGRAGTRPR.

The protein belongs to the class-II aminoacyl-tRNA synthetase family. HisZ subfamily. As to quaternary structure, heteromultimer composed of HisG and HisZ subunits.

The protein resides in the cytoplasm. The protein operates within amino-acid biosynthesis; L-histidine biosynthesis; L-histidine from 5-phospho-alpha-D-ribose 1-diphosphate: step 1/9. Functionally, required for the first step of histidine biosynthesis. May allow the feedback regulation of ATP phosphoribosyltransferase activity by histidine. This chain is ATP phosphoribosyltransferase regulatory subunit, found in Anaeromyxobacter dehalogenans (strain 2CP-C).